The sequence spans 393 residues: Mitogen-activated protein kinase homolog NTF4 (393 aa).

Positions 1 to 32 are disordered; the sequence is MDGPAHQTDTVMSDAAGQQPAPPSQPVAGIDN. Residues 60-345 form the Protein kinase domain; sequence KPPIMPIGKG…VEDALAHPYL (286 aa). ATP contacts are provided by residues 66 to 74 and Lys-89; that span reads IGKGAYGIV. The active-site Proton acceptor is Asp-186. Position 218 is a phosphothreonine (Thr-218). Residues 218-220 carry the TXY motif; sequence TEY. At Tyr-220 the chain carries Phosphotyrosine.

This sequence belongs to the protein kinase superfamily. CMGC Ser/Thr protein kinase family. MAP kinase subfamily. The cofactor is Mg(2+). Post-translationally, dually phosphorylated on Thr-218 and Tyr-220, which activates the enzyme. Very low autophosphorylation, although dramatically increased when Mn(2+) is added to the reaction instead of Mg(2+).

The enzyme catalyses L-seryl-[protein] + ATP = O-phospho-L-seryl-[protein] + ADP + H(+). It carries out the reaction L-threonyl-[protein] + ATP = O-phospho-L-threonyl-[protein] + ADP + H(+). Its activity is regulated as follows. Activated by tyrosine and threonine phosphorylation. The chain is Mitogen-activated protein kinase homolog NTF4 (NTF4) from Nicotiana tabacum (Common tobacco).